The primary structure comprises 180 residues: dCTP deaminase (180 aa).

Residues 101–106 (KSSFAR) and Asp-117 contribute to the dCTP site. Catalysis depends on Glu-127, which acts as the Proton donor/acceptor. The dCTP site is built by Tyr-159 and Gln-168.

This sequence belongs to the dCTP deaminase family. Homotrimer.

The enzyme catalyses dCTP + H2O + H(+) = dUTP + NH4(+). The protein operates within pyrimidine metabolism; dUMP biosynthesis; dUMP from dCTP (dUTP route): step 1/2. Catalyzes the deamination of dCTP to dUTP. This Ignicoccus hospitalis (strain KIN4/I / DSM 18386 / JCM 14125) protein is dCTP deaminase.